The sequence spans 451 residues: Exodeoxyribonuclease 7 large subunit (451 aa).

Belongs to the XseA family. In terms of assembly, heterooligomer composed of large and small subunits.

Its subcellular location is the cytoplasm. The enzyme catalyses Exonucleolytic cleavage in either 5'- to 3'- or 3'- to 5'-direction to yield nucleoside 5'-phosphates.. Bidirectionally degrades single-stranded DNA into large acid-insoluble oligonucleotides, which are then degraded further into small acid-soluble oligonucleotides. In Neisseria meningitidis serogroup B (strain ATCC BAA-335 / MC58), this protein is Exodeoxyribonuclease 7 large subunit.